Reading from the N-terminus, the 428-residue chain is 3-phosphoshikimate 1-carboxyvinyltransferase (428 aa).

3 residues coordinate 3-phosphoshikimate: lysine 20, serine 21, and arginine 25. Lysine 20 is a phosphoenolpyruvate binding site. Residues glycine 92 and arginine 120 each contribute to the phosphoenolpyruvate site. 4 residues coordinate 3-phosphoshikimate: serine 166, glutamine 168, aspartate 314, and lysine 341. Glutamine 168 is a phosphoenolpyruvate binding site. Aspartate 314 functions as the Proton acceptor in the catalytic mechanism. Phosphoenolpyruvate contacts are provided by arginine 345 and arginine 387.

This sequence belongs to the EPSP synthase family. In terms of assembly, monomer.

The protein resides in the cytoplasm. It catalyses the reaction 3-phosphoshikimate + phosphoenolpyruvate = 5-O-(1-carboxyvinyl)-3-phosphoshikimate + phosphate. It functions in the pathway metabolic intermediate biosynthesis; chorismate biosynthesis; chorismate from D-erythrose 4-phosphate and phosphoenolpyruvate: step 6/7. In terms of biological role, catalyzes the transfer of the enolpyruvyl moiety of phosphoenolpyruvate (PEP) to the 5-hydroxyl of shikimate-3-phosphate (S3P) to produce enolpyruvyl shikimate-3-phosphate and inorganic phosphate. The polypeptide is 3-phosphoshikimate 1-carboxyvinyltransferase (Listeria welshimeri serovar 6b (strain ATCC 35897 / DSM 20650 / CCUG 15529 / CIP 8149 / NCTC 11857 / SLCC 5334 / V8)).